We begin with the raw amino-acid sequence, 22 residues long: Melittin-related peptide FQ-22-1 (22 aa).

Glutamine 22 is modified (glutamine amide).

In terms of tissue distribution, expressed by the skin glands.

The protein localises to the secreted. The polypeptide is Melittin-related peptide FQ-22-1 (Rana arvalis (Moor frog)).